The primary structure comprises 330 residues: tRNA (guanine-N(7)-)-methyltransferase (330 aa).

Residues Met1–Gly27 form a disordered region. A compositionally biased stretch (basic residues) spans Lys7–Ala18. S-adenosyl-L-methionine is bound by residues Gly95 and Glu118 to Ile119. Residues Gln138–Gln185 form a disordered region. A compositionally biased stretch (low complexity) spans Ser144 to Thr162. The span at Thr172–Gln185 shows a compositional bias: polar residues. Residues Asn193–Thr194 and Cys213 each bind S-adenosyl-L-methionine. Residue Asp216 is part of the active site. Thr302–Glu304 serves as a coordination point for S-adenosyl-L-methionine.

Belongs to the class I-like SAM-binding methyltransferase superfamily. TrmB family. In terms of assembly, forms a complex with trm82.

It is found in the nucleus. The enzyme catalyses guanosine(46) in tRNA + S-adenosyl-L-methionine = N(7)-methylguanosine(46) in tRNA + S-adenosyl-L-homocysteine. It participates in tRNA modification; N(7)-methylguanine-tRNA biosynthesis. Its function is as follows. Catalyzes the formation of N(7)-methylguanine at position 46 (m7G46) in tRNA. This chain is tRNA (guanine-N(7)-)-methyltransferase (trm8), found in Aspergillus oryzae (strain ATCC 42149 / RIB 40) (Yellow koji mold).